Here is a 255-residue protein sequence, read N- to C-terminus: Cyclase-like protein 1 (255 aa).

The N-terminal stretch at 1–24 (MTRSVSFPLFLFAVVLSLSSSLLA) is a signal peptide.

This sequence belongs to the Cyclase 1 superfamily.

Its subcellular location is the secreted. It is found in the extracellular space. The protein resides in the extracellular matrix. In terms of biological role, acts as a negative regulator of fumonisin B1- and pathogen-induced programmed cell death (PCD), and regulates pathogen-induced symptom development. May function redundantly with CYCLASE2 for normal plant growth, development and viability. The polypeptide is Cyclase-like protein 1 (Arabidopsis thaliana (Mouse-ear cress)).